We begin with the raw amino-acid sequence, 223 residues long: Holliday junction branch migration complex subunit RuvA (223 aa).

The interval 1–67 (MIGWLKGEKI…EDGSNLFGFI (67 aa)) is domain I. Residues 68–146 (EKSERDLFRK…DFDLNNEFSP (79 aa)) form a domain II region. Positions 147–157 (PTKLRPESAED) are flexible linker. The segment at 158–223 (LNEELLTEIK…FKQALITLNK (66 aa)) is domain III.

This sequence belongs to the RuvA family. Homotetramer. Forms an RuvA(8)-RuvB(12)-Holliday junction (HJ) complex. HJ DNA is sandwiched between 2 RuvA tetramers; dsDNA enters through RuvA and exits via RuvB. An RuvB hexamer assembles on each DNA strand where it exits the tetramer. Each RuvB hexamer is contacted by two RuvA subunits (via domain III) on 2 adjacent RuvB subunits; this complex drives branch migration. In the full resolvosome a probable DNA-RuvA(4)-RuvB(12)-RuvC(2) complex forms which resolves the HJ.

The protein localises to the cytoplasm. In terms of biological role, the RuvA-RuvB-RuvC complex processes Holliday junction (HJ) DNA during genetic recombination and DNA repair, while the RuvA-RuvB complex plays an important role in the rescue of blocked DNA replication forks via replication fork reversal (RFR). RuvA specifically binds to HJ cruciform DNA, conferring on it an open structure. The RuvB hexamer acts as an ATP-dependent pump, pulling dsDNA into and through the RuvAB complex. HJ branch migration allows RuvC to scan DNA until it finds its consensus sequence, where it cleaves and resolves the cruciform DNA. The polypeptide is Holliday junction branch migration complex subunit RuvA (Prochlorococcus marinus (strain MIT 9211)).